We begin with the raw amino-acid sequence, 39 residues long: U-limacoditoxin(13)-As54 (39 aa).

A signal peptide spans 1–23; the sequence is MSKYIVLLVVSAIALLQFSMIEC. A Phenylalanine amide modification is found at Phe37.

The protein belongs to the FARP (FMRFamide related peptide) family. Expressed by the venom secretory cell of the spine. The spine is a cuticular structure containing a single large nucleated venom-secreting cell at its base. It is an independent unit capable of producing, storing and injecting venom. On the back of A.stimulea caterpillars, spines are grouped together by 50 to 100 to form scoli, of which there are eight.

Its subcellular location is the secreted. Its function is as follows. Strongly activates (at 30 uM) the human neuropeptide FF receptor 1 (NPFF1R), a G-protein coupled receptor, with an effect that is equipotent to the endogenous RFRP-1 ligand in activating NPFFR1. Is toxic when injected into Drosophila melanogaster. Also shows a moderate anthelmintic activity against the parasitic nematode H.contortus (drug susceptible Kirby isolate) (IC(50)=20.1 uM). The chain is U-limacoditoxin(13)-As54 from Acharia stimulea (Saddleback caterpillar moth).